The sequence spans 225 residues: 3-dehydroquinate dehydratase (225 aa).

Residues S6, 30–32 (EWR), and R62 each bind 3-dehydroquinate. H118 functions as the Proton donor/acceptor in the catalytic mechanism. K143 acts as the Schiff-base intermediate with substrate in catalysis. 3-dehydroquinate contacts are provided by R186, T205, and Q209.

This sequence belongs to the type-I 3-dehydroquinase family. Homodimer.

It carries out the reaction 3-dehydroquinate = 3-dehydroshikimate + H2O. It functions in the pathway metabolic intermediate biosynthesis; chorismate biosynthesis; chorismate from D-erythrose 4-phosphate and phosphoenolpyruvate: step 3/7. Involved in the third step of the chorismate pathway, which leads to the biosynthesis of aromatic amino acids. Catalyzes the cis-dehydration of 3-dehydroquinate (DHQ) and introduces the first double bond of the aromatic ring to yield 3-dehydroshikimate. This Streptococcus gordonii (strain Challis / ATCC 35105 / BCRC 15272 / CH1 / DL1 / V288) protein is 3-dehydroquinate dehydratase.